Here is a 344-residue protein sequence, read N- to C-terminus: Phenylalanine--tRNA ligase alpha subunit (344 aa).

Mg(2+) is bound at residue Glu-261.

Belongs to the class-II aminoacyl-tRNA synthetase family. Phe-tRNA synthetase alpha subunit type 1 subfamily. As to quaternary structure, tetramer of two alpha and two beta subunits. Mg(2+) is required as a cofactor.

The protein localises to the cytoplasm. The enzyme catalyses tRNA(Phe) + L-phenylalanine + ATP = L-phenylalanyl-tRNA(Phe) + AMP + diphosphate + H(+). The sequence is that of Phenylalanine--tRNA ligase alpha subunit from Ehrlichia ruminantium (strain Gardel).